A 277-amino-acid chain; its full sequence is MTQYIPDTQRPIGLFDSGEGGLTVARAVADLLPQENLIYACDTAHFPYGPRPLAEVRAFFRRFMEFFVEQNCKLVIVACNTATAAAIDLLLADAFPIPALGVVQPGAAMAAEASVTGRIGVAATQGTCDSGIYPQTIRLFRPDAYVVQQACPILVIRAEEGVISGPEVRREVERCLAPILAERVDTLVLGCTHFPHMAKVIQDVVGPAVRLVDPGKATAVQVADLLRRRGLLNPGPGPGQRRAFTTGDPQRFLEVACRLWPGGVDAAAHIHLWSQQE.

Residues 16–17 (DS) and 48–49 (YG) each bind substrate. Cys-79 functions as the Proton donor/acceptor in the catalytic mechanism. Substrate is bound at residue 80-81 (NT). Cys-191 serves as the catalytic Proton donor/acceptor. 192-193 (TH) is a substrate binding site.

It belongs to the aspartate/glutamate racemases family.

It carries out the reaction L-glutamate = D-glutamate. Its pathway is cell wall biogenesis; peptidoglycan biosynthesis. In terms of biological role, provides the (R)-glutamate required for cell wall biosynthesis. In Symbiobacterium thermophilum (strain DSM 24528 / JCM 14929 / IAM 14863 / T), this protein is Glutamate racemase.